A 157-amino-acid polypeptide reads, in one-letter code: 2-C-methyl-D-erythritol 2,4-cyclodiphosphate synthase (157 aa).

The a divalent metal cation site is built by aspartate 8 and histidine 10. Residues 8-10 (DVH) and 34-35 (HS) each bind 4-CDP-2-C-methyl-D-erythritol 2-phosphate. Histidine 42 is a binding site for a divalent metal cation. Residues 56–58 (DIG), 132–135 (TTNE), and arginine 142 contribute to the 4-CDP-2-C-methyl-D-erythritol 2-phosphate site.

This sequence belongs to the IspF family. In terms of assembly, homotrimer. A divalent metal cation is required as a cofactor.

The catalysed reaction is 4-CDP-2-C-methyl-D-erythritol 2-phosphate = 2-C-methyl-D-erythritol 2,4-cyclic diphosphate + CMP. It participates in isoprenoid biosynthesis; isopentenyl diphosphate biosynthesis via DXP pathway; isopentenyl diphosphate from 1-deoxy-D-xylulose 5-phosphate: step 4/6. Its function is as follows. Involved in the biosynthesis of isopentenyl diphosphate (IPP) and dimethylallyl diphosphate (DMAPP), two major building blocks of isoprenoid compounds. Catalyzes the conversion of 4-diphosphocytidyl-2-C-methyl-D-erythritol 2-phosphate (CDP-ME2P) to 2-C-methyl-D-erythritol 2,4-cyclodiphosphate (ME-CPP) with a corresponding release of cytidine 5-monophosphate (CMP). This chain is 2-C-methyl-D-erythritol 2,4-cyclodiphosphate synthase, found in Pelodictyon phaeoclathratiforme (strain DSM 5477 / BU-1).